Here is a 276-residue protein sequence, read N- to C-terminus: SRR1-like protein (276 aa).

Ser-30 is subject to Phosphoserine. Tyr-34 bears the Phosphotyrosine mark.

It belongs to the SRR1 family.

Functionally, possible regulator involved in a circadian clock input pathway. This chain is SRR1-like protein, found in Drosophila melanogaster (Fruit fly).